The chain runs to 266 residues: Stomatin homolog PH1511 (266 aa).

Residues 7 to 27 (FFVTSIILLFILIFLASAIKI) traverse the membrane as a helical segment. 2 coiled-coil regions span residues 125–152 (GQAHLDELLSERDKLNMQLQRIIDEATD) and 178–213 (RQAEAERERRARITLAEAERQAAEKLREAAEIISEH).

The protein belongs to the band 7/mec-2 family. As to quaternary structure, homotrimer. Interacts with PH1510 and is cleaved by PH1510.

It is found in the membrane. The chain is Stomatin homolog PH1511 from Pyrococcus horikoshii (strain ATCC 700860 / DSM 12428 / JCM 9974 / NBRC 100139 / OT-3).